The chain runs to 881 residues: Ribonucleoside-diphosphate reductase large subunit (881 aa).

Residues 69 to 160 (TIYLDHNGSI…MTNLHDNTSD (92 aa)) form the ATP-cone domain. Substrate is bound by residues Thr271, 286 to 287 (SC), Gly315, 493 to 497 (NLCCE), and 675 to 679 (PTAST). Cys287 and Cys510 are disulfide-bonded. The Proton acceptor role is filled by Asn493. Cys495 functions as the Cysteine radical intermediate in the catalytic mechanism. The active-site Proton acceptor is Glu497.

The protein belongs to the ribonucleoside diphosphate reductase large chain family. As to quaternary structure, heterotetramer composed of a homodimer of the large subunit (R1) and a homodimer of the small subunit (R2). Larger multisubunit protein complex are also active, composed of (R1)n(R2)n.

It carries out the reaction a 2'-deoxyribonucleoside 5'-diphosphate + [thioredoxin]-disulfide + H2O = a ribonucleoside 5'-diphosphate + [thioredoxin]-dithiol. Under complex allosteric control mediated by deoxynucleoside triphosphates and ATP binding. The type of nucleotide bound at the specificity site determines substrate preference. It seems probable that ATP makes the enzyme reduce CDP and UDP, dGTP favors ADP reduction and dTTP favors GDP reduction. In terms of biological role, ribonucleoside-diphosphate reductase holoenzyme provides the precursors necessary for viral DNA synthesis. Allows virus growth in non-dividing cells. Catalyzes the biosynthesis of deoxyribonucleotides from the corresponding ribonucleotides. The chain is Ribonucleoside-diphosphate reductase large subunit (RNR1) from Acanthamoeba polyphaga mimivirus (APMV).